Here is a 247-residue protein sequence, read N- to C-terminus: Small ribosomal subunit protein uS3 (247 aa).

Residues 18–87 (IDEYLAKRFY…NPQITVRRVE (70 aa)) form the KH type-2 domain. Residues 226-247 (QQGEVVGEAPNTPLEEQGQKQG) form a disordered region.

The protein belongs to the universal ribosomal protein uS3 family. Part of the 30S ribosomal subunit.

In terms of biological role, binds the lower part of the 30S subunit head. The sequence is that of Small ribosomal subunit protein uS3 from Hyperthermus butylicus (strain DSM 5456 / JCM 9403 / PLM1-5).